Consider the following 95-residue polypeptide: Large ribosomal subunit protein eL43 (95 aa).

The C4-type zinc finger occupies 38–59 (CPDCGSEAVSREGTGIWQCGKC).

This sequence belongs to the eukaryotic ribosomal protein eL43 family. Zn(2+) serves as cofactor.

This Halobacterium salinarum (strain ATCC 29341 / DSM 671 / R1) protein is Large ribosomal subunit protein eL43.